Here is a 386-residue protein sequence, read N- to C-terminus: MATTKSFLILFFMILATTSSTCAKLEEMVTVLSIDGGGIKGIIPAIILEFLEGQLQEVDNNKDARLADYFDVIGGTSTGGLLTAMITTPNENNRPFAAAKDIVPFYFEHGPHIFNYSGSIFGPRYDGKYLLQVLQEKLGETRVHQALTEVAISSFDIKTNKPVIFTKSNLAKSPELDAKMYDICYSTAAAPIYFPPHHFVTHTSNGATYEFNLVDGGVATVGDPALLSLSVATRLAQEDPAFSSIKSLDYKQMLLLSLGTGTNSEFDKTYTAEEAAKWGPLRWMLAIQQMTNAASSYMTDYYISTVFQARHSQNNYLRVQENALTGTTTEMDDASEANMELLVQVGETLLKKPVSKDSPETYEEALKRFAKLLSNRKKLRANKASY.

An N-terminal signal peptide occupies residues 1-23 (MATTKSFLILFFMILATTSSTCA). The PNPLA domain maps to 32–229 (LSIDGGGIKG…TVGDPALLSL (198 aa)). Residues 36–41 (GGGIKG) carry the GXGXXG motif. Positions 75–79 (GTSTG) match the GXSXG motif. Serine 77 acts as the Nucleophile in catalysis. An N-linked (GlcNAc...) asparagine glycan is attached at asparagine 115. Aspartate 215 (proton acceptor) is an active-site residue. Residues 215–217 (DGG) carry the DGA/G motif. A coiled-coil region spans residues 321-384 (ENALTGTTTE…NRKKLRANKA (64 aa)).

This sequence belongs to the patatin family. In terms of tissue distribution, tuber.

Its subcellular location is the vacuole. Functionally, probable lipolytic acyl hydrolase (LAH), an activity which is thought to be involved in the response of tubers to pathogens. The chain is Patatin-06 from Solanum tuberosum (Potato).